The primary structure comprises 146 residues: Putative pre-16S rRNA nuclease (146 aa).

It belongs to the YqgF nuclease family.

It localises to the cytoplasm. Its function is as follows. Could be a nuclease involved in processing of the 5'-end of pre-16S rRNA. The protein is Putative pre-16S rRNA nuclease of Pseudomonas syringae pv. syringae (strain B728a).